Reading from the N-terminus, the 310-residue chain is Methionyl-tRNA formyltransferase (310 aa).

Residue 109 to 112 coordinates (6S)-5,6,7,8-tetrahydrofolate; the sequence is SLLP.

Belongs to the Fmt family.

The enzyme catalyses L-methionyl-tRNA(fMet) + (6R)-10-formyltetrahydrofolate = N-formyl-L-methionyl-tRNA(fMet) + (6S)-5,6,7,8-tetrahydrofolate + H(+). Functionally, attaches a formyl group to the free amino group of methionyl-tRNA(fMet). The formyl group appears to play a dual role in the initiator identity of N-formylmethionyl-tRNA by promoting its recognition by IF2 and preventing the misappropriation of this tRNA by the elongation apparatus. This is Methionyl-tRNA formyltransferase from Staphylococcus epidermidis (strain ATCC 35984 / DSM 28319 / BCRC 17069 / CCUG 31568 / BM 3577 / RP62A).